A 209-amino-acid chain; its full sequence is RNA chaperone ProQ (209 aa).

A disordered region spans residues 101 to 155 (LAESKAKVQARRKEQAQKAREEGKAKAKPAANKKPQQPRRTNKPKVQKPTKPVET). The span at 111–125 (RRKEQAQKAREEGKA) shows a compositional bias: basic and acidic residues. Over residues 136-148 (QQPRRTNKPKVQK) the composition is skewed to basic residues.

Belongs to the ProQ family.

It localises to the cytoplasm. In terms of biological role, RNA chaperone with significant RNA binding, RNA strand exchange and RNA duplexing activities. This Vibrio parahaemolyticus serotype O3:K6 (strain RIMD 2210633) protein is RNA chaperone ProQ.